A 522-amino-acid polypeptide reads, in one-letter code: Peptide methionine sulfoxide reductase MsrA/MsrB (522 aa).

Residues 17–174 (LALGACSPKI…ALALIRDPNA (158 aa)) form the Thioredoxin domain. An intrachain disulfide couples C68 to C71. A peptide methionine sulfoxide reductase A region spans residues 199 to 354 (RTIYLAGGCF…PNGYCHIDIR (156 aa)). C207 is an active-site residue. In terms of domain architecture, MsrB spans 383–506 (DAELKRTLTE…NGASLKFIPL (124 aa)). C440 and C495 are joined by a disulfide. The active-site Nucleophile is the C495.

The protein in the N-terminal section; belongs to the thioredoxin family. In the central section; belongs to the MsrA Met sulfoxide reductase family. This sequence in the C-terminal section; belongs to the MsrB Met sulfoxide reductase family.

The catalysed reaction is L-methionyl-[protein] + [thioredoxin]-disulfide + H2O = L-methionyl-(S)-S-oxide-[protein] + [thioredoxin]-dithiol. It catalyses the reaction [thioredoxin]-disulfide + L-methionine + H2O = L-methionine (S)-S-oxide + [thioredoxin]-dithiol. It carries out the reaction L-methionyl-[protein] + [thioredoxin]-disulfide + H2O = L-methionyl-(R)-S-oxide-[protein] + [thioredoxin]-dithiol. Has an important function as a repair enzyme for proteins that have been inactivated by oxidation. Catalyzes the reversible oxidation-reduction of methionine sulfoxide in proteins to methionine. In Neisseria meningitidis serogroup A / serotype 4A (strain DSM 15465 / Z2491), this protein is Peptide methionine sulfoxide reductase MsrA/MsrB (msrAB).